A 301-amino-acid polypeptide reads, in one-letter code: MKGFSCSRPGYLTGLLLLAVAPILTACTRDYTTKNEFQLTTAQQAKLKPATIEYWRDGDTPEINYASEERRKEAEQKSKENAKKEDKKEEKKTEDSQDSSSASTQVRSSKHGLRIYGIDTPEKHVSSKGDSTGDEKIEAEKASNYAEKLIPKGSTVWVWSLNTYSYDREVGALFFKSNPKQTFFQSFEVAMVEAGHAIPIAGTGLNLIADPELSADDPLSVIGLQLANAANKAYNAKINIWSHDTDGYRSLTAVYKLRGADISWTRFLDEANGYSSASAGTGASLYQLWDQRQAKLAQKGS.

A signal peptide spans 1–26; that stretch reads MKGFSCSRPGYLTGLLLLAVAPILTA. The N-palmitoyl cysteine moiety is linked to residue Cys-27. The S-diacylglycerol cysteine moiety is linked to residue Cys-27. In terms of domain architecture, TNase-like spans 46 to 243; it reads KLKPATIEYW…YNAKINIWSH (198 aa). Residues 64-136 form a disordered region; it reads NYASEERRKE…SKGDSTGDEK (73 aa). 2 stretches are compositionally biased toward basic and acidic residues: residues 67–95 and 120–136; these read SEER…KTED and TPEK…GDEK.

The protein resides in the cell membrane. This is an uncharacterized protein from Mycoplasma pneumoniae (strain ATCC 29342 / M129 / Subtype 1) (Mycoplasmoides pneumoniae).